A 460-amino-acid polypeptide reads, in one-letter code: Receptor-like cytosolic serine/threonine-protein kinase RBK2 (460 aa).

Positions 1 to 67 are disordered; it reads MNSASAHDLR…DADTDVQCKN (67 aa). Residues 7-23 are compositionally biased toward basic and acidic residues; that stretch reads HDLRLLEVDKEKQDPKS. Residues 143-415 form the Protein kinase domain; it reads FSPENIIGRG…VELLLGHEDV (273 aa). Residues 149–157 and K171 contribute to the ATP site; that span reads IGRGGYADV. D267 functions as the Proton acceptor in the catalytic mechanism. At T307 the chain carries Phosphothreonine. Position 315 is a phosphotyrosine (Y315).

This sequence belongs to the protein kinase superfamily. Ser/Thr protein kinase family. As to quaternary structure, interacts with ARAC5 and ARAC10.

It is found in the cytoplasm. It catalyses the reaction L-seryl-[protein] + ATP = O-phospho-L-seryl-[protein] + ADP + H(+). It carries out the reaction L-threonyl-[protein] + ATP = O-phospho-L-threonyl-[protein] + ADP + H(+). This chain is Receptor-like cytosolic serine/threonine-protein kinase RBK2 (RBK2), found in Arabidopsis thaliana (Mouse-ear cress).